The sequence spans 95 residues: MLNLLCAVYKSSKKADTYLYVPGRDDFSRVPESLMKMFGAPRFIMIMPIKKDRTLGQVDIQTLRDELTKNGFYLQLPPPEENLLKQHLAAQSPKD.

In terms of domain architecture, YcgL spans 4–88 (LLCAVYKSSK…PEENLLKQHL (85 aa)).

The chain is YcgL domain-containing protein Patl_2802 from Pseudoalteromonas atlantica (strain T6c / ATCC BAA-1087).